Reading from the N-terminus, the 878-residue chain is Pyruvate dehydrogenase phosphatase regulatory subunit, mitochondrial (878 aa).

The N-terminal 26 residues, 1-26, are a transit peptide targeting the mitochondrion; that stretch reads MLPRLLAVVRGPGSCRGWREGSPARG.

It belongs to the GcvT family. As to quaternary structure, heterodimer of a catalytic (PDP1) and a regulatory (PDPR) subunit.

The protein localises to the mitochondrion matrix. Its function is as follows. Decreases the sensitivity of PDP1 to magnesium ions, and this inhibition is reversed by the polyamine spermine. The protein is Pyruvate dehydrogenase phosphatase regulatory subunit, mitochondrial (PDPR) of Bos taurus (Bovine).